Reading from the N-terminus, the 357-residue chain is Peptide chain release factor 1 (357 aa).

At Q236 the chain carries N5-methylglutamine.

Belongs to the prokaryotic/mitochondrial release factor family. Methylated by PrmC. Methylation increases the termination efficiency of RF1.

Its subcellular location is the cytoplasm. In terms of biological role, peptide chain release factor 1 directs the termination of translation in response to the peptide chain termination codons UAG and UAA. The sequence is that of Peptide chain release factor 1 (prfA) from Mycobacterium bovis (strain ATCC BAA-935 / AF2122/97).